The primary structure comprises 253 residues: HTH-type transcriptional regulator YdeO (253 aa).

Residues 137–233 (GKVRNIVNMK…GNSPKRVSKE (97 aa)) enclose the HTH araC/xylS-type domain. DNA-binding regions (H-T-H motif) lie at residues 154–175 (KDIC…KQEQ) and 200–223 (VNKI…RKHF).

Its function is as follows. Induces the expression of gadE and mdtEF. Could also regulate the expression of other genes involved in acid resistance. This chain is HTH-type transcriptional regulator YdeO (ydeO), found in Escherichia coli (strain K12).